Consider the following 54-residue polypeptide: Hemolytic toxin (54 aa).

The interval 3–12 (ALAGTIIAGA) is plays an important role in the hemolytic activity. An N-terminal region region spans residues 11 to 30 (GASLGFQILDKVLGELGKVS).

This sequence belongs to the actinoporin family. Sea anemone subfamily. As to quaternary structure, octamer or nonamer in membranes. Monomer in the soluble state.

The protein resides in the secreted. The protein localises to the nematocyst. Its subcellular location is the target cell membrane. Its function is as follows. Pore-forming protein that forms cations-selective hydrophilic pores of around 1 nm and causes cytolysis. Pore formation is a multi-step process that involves specific recognition of membrane sphingomyelin (but neither cholesterol nor phosphatidylcholine) using aromatic rich region and adjacent phosphocholine (POC) binding site, firm binding to the membrane (mainly driven by hydrophobic interactions) accompanied by the transfer of the N-terminal region to the lipid-water interface and finally pore formation after oligomerization of monomers. The chain is Hemolytic toxin from Heteractis magnifica (Magnificent sea anemone).